A 466-amino-acid polypeptide reads, in one-letter code: MADQLYLENIDEFVTDQNKIVTYKWLSYTLGVHVNQAKQMLYDYVERKRKENSGAQLHVTYLVSGSLIQNGHSCHKVAVVREDKLEAVKSKLAVTASIHVYSIQKAMLKDSGPLFNTDYDILKSNLQNCSKFSAIQCAAAVPRAPAESSSSSKKFEQSHLHMSSETQANNELTTNGHGPPASKQVSQQPKGIMGMFASKAAAKTQETNKETKTEAKEVTNASAAGNKAPGKGNMMSNFFGKAAMNKFKVNLDSEQAVKEEKIVEQPTVSVTEPKLATPAGLKKSSKKAEPVKVLQKEKKRGKRVALSDDETKETENMRKKRRRIKLPESDSSEDEVFPDSPGAYEAESPSPPPPPSPPLEPVPKTEPEPPSVKSSSGENKRKRKRVLKSKTYLDGEGCIVTEKVYESESCTDSEEELNMKTSSVHRPPAMTVKKEPREERKGPKKGTAALGKANRQVSITGFFQRK.

Ala2 carries the post-translational modification N-acetylalanine. Disordered regions lie at residues 169 to 188 (NNELTTNGHGPPASKQVSQQ) and 199 to 232 (KAAAKTQETNKETKTEAKEVTNASAAGNKAPGKG). The segment covering 206-217 (ETNKETKTEAKE) has biased composition (basic and acidic residues). Residue Lys258 forms a Glycyl lysine isopeptide (Lys-Gly) (interchain with G-Cter in SUMO); alternate linkage. Lys258 is covalently cross-linked (Glycyl lysine isopeptide (Lys-Gly) (interchain with G-Cter in SUMO2); alternate). A Glycyl lysine isopeptide (Lys-Gly) (interchain with G-Cter in SUMO2) cross-link involves residue Lys261. Disordered stretches follow at residues 274–393 (KLAT…KTYL) and 406–466 (ESES…FQRK). Thr277 carries the post-translational modification Phosphothreonine. A compositionally biased stretch (basic and acidic residues) spans 286–296 (KKAEPVKVLQK). Residue Ser307 is modified to Phosphoserine. Residues 349-361 (PSPPPPPSPPLEP) are compositionally biased toward pro residues. Ser407 and Ser409 each carry phosphoserine. At Thr411 the chain carries Phosphothreonine. Ser413 carries the phosphoserine modification. Positions 432 to 441 (VKKEPREERK) are enriched in basic and acidic residues. Lys433 participates in a covalent cross-link: Glycyl lysine isopeptide (Lys-Gly) (interchain with G-Cter in SUMO); alternate. Lys433 participates in a covalent cross-link: Glycyl lysine isopeptide (Lys-Gly) (interchain with G-Cter in SUMO2); alternate. Polar residues predominate over residues 455-466 (RQVSITGFFQRK). Residues 456 to 463 (QVSITGFF) carry the PIP-box motif. Ser458 is modified (phosphoserine).

Component of both the DNA polymerase delta and DNA polymerase zeta complexes. The tetrameric DNA polymerase delta complex (Pol-delta4), which consists of POLD1/p125, POLD2/p50, POLD3/p66/p68 and POLD4/p12, with POLD1 bearing DNA polymerase and 3' to 5' proofreading exonuclease activities. Within this complex, directly interacts with POLD2. Following stress caused by DNA damaging agents or by replication stress, POLD4 is degraded and Pol-delta4 is converted into a trimeric form of the complex (Pol-delta3), which consists of POLD1, POLD2 and POLD3. Pol-delta3 is the major form occurring at S phase replication sites, as well as DNA damage sites. Directly interacts with PCNA, as do POLD1 and POLD4; this interaction stimulates Pol-delta polymerase activity. POLD3 phosphorylation at Ser-458 impairs PCNA binding. Component of the DNA polymerase zeta complex (POLZ), which consists of REV3L, MAD2L2, POLD2 and POLD3, with REV3L bearing DNA polymerase catalytic activity. The DNA polymerase delta complex interacts with POLDIP2; this interaction is probably mediated through direct binding to POLD2. Ubiquitinated, but not targeted to the proteasome. Sumoylated. Sumoylation with SUMO3 may be predominant. In terms of processing, phosphorylation at Ser-458 is catalyzed in vitro by PKA. It is thought to decrease the affinity for PCNA and Pol-delta4 processivity. Can also be phosphorylated in vitro by CDK1-cyclin-A complex, as well as CDK2-cyclin-A and CDK2-cyclin-E complexes. PCNA interferes with CDK-cyclin phosphorylation.

Its subcellular location is the cytoplasm. The protein resides in the nucleus. In terms of biological role, accessory component of both the DNA polymerase delta complex and the DNA polymerase zeta complex. As a component of the trimeric and tetrameric DNA polymerase delta complexes (Pol-delta3 and Pol-delta4, respectively), plays a role in high fidelity genome replication, including in lagging strand synthesis, and repair. Required for optimal Pol-delta activity. Stabilizes the Pol-delta complex and plays a major role in Pol-delta stimulation by PCNA. Pol-delta3 and Pol-delta4 are characterized by the absence or the presence of POLD4. They exhibit differences in catalytic activity. Most notably, Pol-delta3 shows higher proofreading activity than Pol-delta4. Although both Pol-delta3 and Pol-delta4 process Okazaki fragments in vitro, Pol-delta3 may also be better suited to fulfill this task, exhibiting near-absence of strand displacement activity compared to Pol-delta4 and stalling on encounter with the 5'-blocking oligonucleotides. Pol-delta3 idling process may avoid the formation of a gap, while maintaining a nick that can be readily ligated. Along with DNA polymerase kappa, DNA polymerase delta carries out approximately half of nucleotide excision repair (NER) synthesis following UV irradiation. In this context, POLD3, along with PCNA and RFC1-replication factor C complex, is required to recruit POLD1, the catalytic subunit of the polymerase delta complex, to DNA damage sites. Under conditions of DNA replication stress, required for the repair of broken replication forks through break-induced replication (BIR). Involved in the translesion synthesis (TLS) of templates carrying O6-methylguanine or abasic sites performed by Pol-delta4, independently of DNA polymerase zeta (REV3L) or eta (POLH). Facilitates abasic site bypass by DNA polymerase delta by promoting extension from the nucleotide inserted opposite the lesion. Also involved in TLS, as a component of the tetrameric DNA polymerase zeta complex. Along with POLD2, dramatically increases the efficiency and processivity of DNA synthesis of the DNA polymerase zeta complex compared to the minimal zeta complex, consisting of only REV3L and REV7. This is DNA polymerase delta subunit 3 (POLD3) from Homo sapiens (Human).